A 491-amino-acid chain; its full sequence is MERWWFDSILFKKGFEHRCGLSKSMGGLGPIENTSESEDPNRNDMKKNSHSWGSRDNSSYSNVDYLFGVKDIWNFISDETFLVVDRNGNSYSIYLDIEKHIFEIDSGHFFQSGLESSFYSYWNLSYLNNGSKTDDPHDDHYMDDTQYSWNNHINSYIDIYLESQIFIDTYIVSGSDNYSNSYISRSVCGESESKGSNISTSTNGSTIIESSNDLDITQKYRHLWVQCENCYGLNYKKILKSKMNLCEQCGYHLKMSSSDRIELSIDPDTWDAMDEDMVSLDPIEFHSEEEPYKDRIDSYQRKTGLTEAVQTGIGQLNGIPIALGVMDFQFMGGSMGSVVGEKITRLIEYATNQLLPLIIVCASGGARMQEGSLSLMQMAKISSALYDYQSNKKLFYVPILTSPTTGGVTASFGMLGDIIIAEPNAYIAFAGKRVIEQTLNKTVPEGSQAAEYLFQKGLFDLIVPRNLLKSVLSELFQLHAFFPLNKNSIEH.

Positions 28–56 (LGPIENTSESEDPNRNDMKKNSHSWGSRD) are disordered. A CoA carboxyltransferase N-terminal domain is found at 223-491 (LWVQCENCYG…FPLNKNSIEH (269 aa)). 4 residues coordinate Zn(2+): Cys-227, Cys-230, Cys-246, and Cys-249. Residues 227–249 (CENCYGLNYKKILKSKMNLCEQC) form a C4-type zinc finger.

This sequence belongs to the AccD/PCCB family. In terms of assembly, acetyl-CoA carboxylase is a heterohexamer composed of biotin carboxyl carrier protein, biotin carboxylase and 2 subunits each of ACCase subunit alpha and ACCase plastid-coded subunit beta (accD). It depends on Zn(2+) as a cofactor.

It is found in the plastid. It localises to the chloroplast stroma. It carries out the reaction N(6)-carboxybiotinyl-L-lysyl-[protein] + acetyl-CoA = N(6)-biotinyl-L-lysyl-[protein] + malonyl-CoA. It functions in the pathway lipid metabolism; malonyl-CoA biosynthesis; malonyl-CoA from acetyl-CoA: step 1/1. Its function is as follows. Component of the acetyl coenzyme A carboxylase (ACC) complex. Biotin carboxylase (BC) catalyzes the carboxylation of biotin on its carrier protein (BCCP) and then the CO(2) group is transferred by the transcarboxylase to acetyl-CoA to form malonyl-CoA. The chain is Acetyl-coenzyme A carboxylase carboxyl transferase subunit beta, chloroplastic from Daucus carota (Wild carrot).